A 73-amino-acid chain; its full sequence is Large ribosomal subunit protein uL29 (73 aa).

The disordered stretch occupies residues 1 to 20 (MYKAKDLRDQSLEELEATHD).

This sequence belongs to the universal ribosomal protein uL29 family.

The polypeptide is Large ribosomal subunit protein uL29 (Protochlamydia amoebophila (strain UWE25)).